The primary structure comprises 213 residues: Urease accessory protein UreG (213 aa).

17–24 (GPVGSGKT) serves as a coordination point for GTP.

The protein belongs to the SIMIBI class G3E GTPase family. UreG subfamily. As to quaternary structure, homodimer. UreD, UreF and UreG form a complex that acts as a GTP-hydrolysis-dependent molecular chaperone, activating the urease apoprotein by helping to assemble the nickel containing metallocenter of UreC. The UreE protein probably delivers the nickel.

Its subcellular location is the cytoplasm. Facilitates the functional incorporation of the urease nickel metallocenter. This process requires GTP hydrolysis, probably effectuated by UreG. This is Urease accessory protein UreG from Delftia acidovorans (strain DSM 14801 / SPH-1).